Here is a 194-residue protein sequence, read N- to C-terminus: Imidazoleglycerol-phosphate dehydratase (194 aa).

This sequence belongs to the imidazoleglycerol-phosphate dehydratase family.

Its subcellular location is the cytoplasm. It catalyses the reaction D-erythro-1-(imidazol-4-yl)glycerol 3-phosphate = 3-(imidazol-4-yl)-2-oxopropyl phosphate + H2O. Its pathway is amino-acid biosynthesis; L-histidine biosynthesis; L-histidine from 5-phospho-alpha-D-ribose 1-diphosphate: step 6/9. This is Imidazoleglycerol-phosphate dehydratase from Caldicellulosiruptor bescii (strain ATCC BAA-1888 / DSM 6725 / KCTC 15123 / Z-1320) (Anaerocellum thermophilum).